We begin with the raw amino-acid sequence, 597 residues long: Elongation factor 4 (597 aa).

Residues 2–184 (KNIRNFSIIA…EIVAKIPAPT (183 aa)) form the tr-type G domain. GTP-binding positions include 14 to 19 (DHGKST) and 131 to 134 (NKID).

The protein belongs to the TRAFAC class translation factor GTPase superfamily. Classic translation factor GTPase family. LepA subfamily.

Its subcellular location is the cell inner membrane. The catalysed reaction is GTP + H2O = GDP + phosphate + H(+). Required for accurate and efficient protein synthesis under certain stress conditions. May act as a fidelity factor of the translation reaction, by catalyzing a one-codon backward translocation of tRNAs on improperly translocated ribosomes. Back-translocation proceeds from a post-translocation (POST) complex to a pre-translocation (PRE) complex, thus giving elongation factor G a second chance to translocate the tRNAs correctly. Binds to ribosomes in a GTP-dependent manner. In Neisseria gonorrhoeae (strain ATCC 700825 / FA 1090), this protein is Elongation factor 4.